Consider the following 409-residue polypeptide: N-acetylglucosamine-6-phosphate deacetylase (409 aa).

Glutamate 143 contributes to the a divalent metal cation binding site. Position 154 to 155 (154 to 155 (AH)) interacts with substrate. Histidine 211 and histidine 232 together coordinate a divalent metal cation. Substrate is bound by residues 235-236 (NA), arginine 243, and 269-272 (DGIH). Aspartate 294 acts as the Proton donor/acceptor in catalysis. 328 to 330 (LSG) provides a ligand contact to substrate.

The protein belongs to the metallo-dependent hydrolases superfamily. NagA family. The cofactor is a divalent metal cation.

The catalysed reaction is N-acetyl-D-glucosamine 6-phosphate + H2O = D-glucosamine 6-phosphate + acetate. Its pathway is amino-sugar metabolism; N-acetylneuraminate degradation. Functionally, hydrolyzes the N-glycolyl group from N-glycolylglucosamine 6-phosphate (GlcNGc-6-P) in the N-glycolylneuraminic acid (Neu5Gc) degradation pathway. The polypeptide is N-acetylglucosamine-6-phosphate deacetylase (Amdhd2) (Rattus norvegicus (Rat)).